A 203-amino-acid polypeptide reads, in one-letter code: Translation machinery-associated protein 16 (203 aa).

The segment at Met1 to Lys39 is disordered. The residue at position 9 (Ser9) is an ADP-ribosylserine. The span at Arg29 to Lys39 shows a compositional bias: basic and acidic residues.

The protein belongs to the TMA16 family. As to quaternary structure, associates with pre-60S ribosomal particles.

Its subcellular location is the nucleus. Its function is as follows. Involved in the biogenesis of the 60S ribosomal subunit in the nucleus. This is Translation machinery-associated protein 16 (TMA16) from Homo sapiens (Human).